The primary structure comprises 178 residues: Fimbrial adapter PapK (178 aa).

The signal sequence occupies residues 1–21; that stretch reads MIKSTGALLLFAALSAGQAIA.

It is found in the secreted. Its subcellular location is the fimbrium. Adapter that links the pilus rod to the base of the tip fibrillum. Regulates the length of the tip fibrillum and joins it to the pilus rod. Pili are polar filaments radiating from the surface of the bacterium to a length of 0.5-1.5 micrometers and numbering 100-300 per cell, and enable bacteria to colonize the epithelium of specific host organs. The protein is Fimbrial adapter PapK (papK) of Escherichia coli O6:H1 (strain CFT073 / ATCC 700928 / UPEC).